Reading from the N-terminus, the 216-residue chain is MTLSVYHYIENTWNSEEWKKGVLRQRFIEWRKEPSIVRLAKPTRLNRARSLGYKAKQGFVIVRVRVRRGGLNKPRPNKGRRPKRMGVYGYGPAKGYKWIAEERAARKYPNLEVLGSYYVGEDGLYKYYEIIMVDPSHPVIKNDPNYKWLQDPSNRNRVFRGLTSAGKKARGLRKSKGFKGTVKHKWSRKQKEREEKKRHEASKYYRLQRYDKIPGK.

Positions 170–188 (RGLRKSKGFKGTVKHKWSR) are enriched in basic residues. The segment at 170–201 (RGLRKSKGFKGTVKHKWSRKQKEREEKKRHEA) is disordered. Residues 189–201 (KQKEREEKKRHEA) are compositionally biased toward basic and acidic residues.

Belongs to the eukaryotic ribosomal protein eL15 family.

This Saccharolobus islandicus (strain M.16.27) (Sulfolobus islandicus) protein is Large ribosomal subunit protein eL15.